A 67-amino-acid polypeptide reads, in one-letter code: Beta-defensin 123 (67 aa).

The N-terminal stretch at 1 to 20 (MKLLLLTLTVLLLLSQLTPG) is a signal peptide. 3 cysteine pairs are disulfide-bonded: C25-C52, C32-C46, and C36-C53.

Belongs to the beta-defensin family.

The protein resides in the secreted. Functionally, has antibacterial activity. This chain is Beta-defensin 123 (DEFB123), found in Gorilla gorilla gorilla (Western lowland gorilla).